We begin with the raw amino-acid sequence, 264 residues long: Non-homologous end-joining factor xrc4 (264 aa).

Positions 173–186 are enriched in basic and acidic residues; it reads RNNEDNEDNHHINY. A disordered region spans residues 173 to 264; sequence RNNEDNEDNH…SHESSETVSE (92 aa). Residues 200-209 are compositionally biased toward polar residues; sequence QEGVNSSAVS. The span at 248 to 264 shows a compositional bias: basic and acidic residues; sequence DDSHRRSSHESSETVSE.

Belongs to the XRCC4-XLF family. XRCC4 subfamily. As to quaternary structure, interacts with lig4; the interaction is direct.

The protein resides in the nucleus. Functionally, involved in double-strand break repair via non-homologous end joining (NHEJ); the repair of a double-strand break in DNA in which the two broken ends are rejoined with little or no sequence complementarity. The chain is Non-homologous end-joining factor xrc4 from Schizosaccharomyces pombe (strain 972 / ATCC 24843) (Fission yeast).